The following is a 72-amino-acid chain: Cytochrome c oxidase subunit 8C, mitochondrial (72 aa).

The transit peptide at 1 to 29 (MSRLLQFCSSLLRHRVVLFSKPGHSGRLS) directs the protein to the mitochondrion. Topologically, residues 30–40 (HSESPQNQVLT) are mitochondrial matrix. Residues 41 to 64 (PTESVVGIVVFFATFFIPAAYVMS) form a helical membrane-spanning segment. Residues 65 to 72 (NLKFFKGE) are Mitochondrial intermembrane-facing.

Belongs to the cytochrome c oxidase VIII family. As to quaternary structure, component of the cytochrome c oxidase (complex IV, CIV), a multisubunit enzyme composed of 14 subunits. The complex is composed of a catalytic core of 3 subunits MT-CO1, MT-CO2 and MT-CO3, encoded in the mitochondrial DNA, and 11 supernumerary subunits COX4I, COX5A, COX5B, COX6A, COX6B, COX6C, COX7A, COX7B, COX7C, COX8 and NDUFA4, which are encoded in the nuclear genome. The complex exists as a monomer or a dimer and forms supercomplexes (SCs) in the inner mitochondrial membrane with NADH-ubiquinone oxidoreductase (complex I, CI) and ubiquinol-cytochrome c oxidoreductase (cytochrome b-c1 complex, complex III, CIII), resulting in different assemblies (supercomplex SCI(1)III(2)IV(1) and megacomplex MCI(2)III(2)IV(2)).

The protein localises to the mitochondrion inner membrane. The protein operates within energy metabolism; oxidative phosphorylation. Functionally, component of the cytochrome c oxidase, the last enzyme in the mitochondrial electron transport chain which drives oxidative phosphorylation. The respiratory chain contains 3 multisubunit complexes succinate dehydrogenase (complex II, CII), ubiquinol-cytochrome c oxidoreductase (cytochrome b-c1 complex, complex III, CIII) and cytochrome c oxidase (complex IV, CIV), that cooperate to transfer electrons derived from NADH and succinate to molecular oxygen, creating an electrochemical gradient over the inner membrane that drives transmembrane transport and the ATP synthase. Cytochrome c oxidase is the component of the respiratory chain that catalyzes the reduction of oxygen to water. Electrons originating from reduced cytochrome c in the intermembrane space (IMS) are transferred via the dinuclear copper A center (CU(A)) of subunit 2 and heme A of subunit 1 to the active site in subunit 1, a binuclear center (BNC) formed by heme A3 and copper B (CU(B)). The BNC reduces molecular oxygen to 2 water molecules using 4 electrons from cytochrome c in the IMS and 4 protons from the mitochondrial matrix. The sequence is that of Cytochrome c oxidase subunit 8C, mitochondrial (Cox8c) from Rattus norvegicus (Rat).